The chain runs to 185 residues: Cytidylate kinase (185 aa).

ATP is bound at residue 8–16 (GPPGSGKTT).

The protein belongs to the cytidylate kinase family. Type 2 subfamily.

It localises to the cytoplasm. It carries out the reaction CMP + ATP = CDP + ADP. It catalyses the reaction dCMP + ATP = dCDP + ADP. The chain is Cytidylate kinase from Desulfurococcus amylolyticus (strain DSM 18924 / JCM 16383 / VKM B-2413 / 1221n) (Desulfurococcus kamchatkensis).